Reading from the N-terminus, the 2053-residue chain is MDRGKGSGSNRSQKKVPLGGELFALGKSVRDDSKSKILPIKGMSSSDRKREASTALASSSKRFRGNLKDAGAPDMSSGSSQCETWEQFAVDCDLDTVVETIYAALEQNDSETVGRLVCGVIKQTTTSSSRSKVDNIALLALIYVAKVQPSIFCTDIVACALLSFLRREANVKMRYNTNLHILFANLLTRGFMEISQWPEVLLRIYIDDAVNERYWADNELCAPLVKNICAAFKTRTPHISLLRWDVSSSLPSGQAHRDSMTVDDDSGDNSTQSLDASPLNTESEPIPDAMCTTKSRFSDAVVQKHVSDAIRDQLNKRQQQDNYTRNFLKFLCTTSGIAEVRCLSISRLELWIHNGKLVKFAQQLLSYICFNIKGRNTQDNEVLLVLVKMRLKTKPLINHYMSCLKEMIFLQPEILSTVMKLVVQNELSNTRNPNNMGMLATMFQTSADQSAATLAEIYQEFLLQRDDCLRTLRVFLRELVRMLRFDVNLVKFCKTFLSEREDLTPQIEMFEFKERIFNSMVDIVCLCMFLSATPQAREASLSLKTNRDTKNNHALLKLYNQMSQIQLDTVSWMYETVPTLFKIPAAEYHQALHKLLLLDSPEQYSRCDQWPSEPERGAILRIISETPIHEETLLRIILIGITKDIPFSIANTFDVLLLVIKRVSGMKATNIPAVQANKFDIIDFLFSMSEYHHPENIRLPAEYEPPKLAIIAFYWKAWLILLMISAHNPSSFGAFCWDHYPTMKMMMEICITNQFNNSSATKDELQIITMERDHILQFETYLAAQTSPHAVITEETAILITQLMLMDPMGTPRKVPSMVLDQLKFLNQTYKLGHLFCRCRKPDLLLDIIQRQGTTQSMPWLSDLVQNSEGDFSHLPVQCLCEFLLFNAHIINEENSRDAELVNFLRNLIFDGNLSHQIVCELLDYIFRRLSSTVKQSRVAALSGLKIIFRHSGDFENEWLLKSLQQIPHFYEVKPFIIPQLRAACQVENCPELIMAYIQFITAHTLNDPVNEMLDHVIDMAQLIVERSTMFQHIIISQEDYDYVPDENRIQTLKCLFVMFNNYIIKLREYHEPYEWTEYPDLLMVQFDDGVQLPLHINIIHAFIILLTYSNSNMPESIPILDYWFPPGRPAPVAFLPSMPQEQVQLLPDWLKLKMIRSSVDRLIEAALNDLTPDQIVLFVQNFGTPVNSMSKLLAMLDTAVLEQFDLVKNAILNKAYLAQLIEIQQARGAKNGHYTVQALDLHSHSQTVPDLPKISVVIQEAVEIDDYDSSDSDDRPTNFLATKEVAQTILTQPDQLTESRSDCRSLIQKLLDMLASPNSNRADVVNAITEVLAVGCSVTMSRHACTFLRTFFSCMLHSDKYHILENALQKNLSMFKHTFADSSLLQKSELYHESLVFMLRNSREIYAQQFKANTALVARKRIVRAIVQSFDQTKDSKTVAKSKSDQLFHNGLFIDWLSEMDPEIVSTQLMKERFLFSKSCSEFRFYLLSLINHQTNWDTIERIAEYLFKNFHEDYDYATVLNYFEALTTNPKLWKGRDKYMSKNVRPDAFFMLRTSELEPFSHFILHEGLSEVKLDSKNYDFKLCSRMNLLFKLTEKRRDLMVKVMEHVEKSSVSDYLKLQVLQQMYIMYPRIKFLKPGKTGEQAYKLQNLKGCQADKVSNNLITCLGSLVGKKDFETLSTDTELLLRKLAASHPLLFLRQLGVLSSIMQGRAQLSMKALREEHHFHRFVQILRTLELLQPTIFEEAYKNEIQNTLSCYFNFFKHHSNVKEACQMLNKFVQMLQAYINYNPSSALLFIEQYVGILKELAAKYTSLGKLQVLVQAVALLQHKSHSATELDDEEVKYEYDLDEHFDVKPSASKPVVTEDPIEVNPQTPIDPSSSRGPLSVLTLGSYSRSNYTDISPHFLDLVKIIKQSNTEDVVLGPMQELECLTSKRFVFINELFERLLNLIFSPSAQIRSIAFIILIRHLKHNPGNSDINLCTLNAYIQCLRDENSSVAATAIDNLPEMSVLLQEHAIDILTVAFSLGLKSCLNTGHQIRKVLQTLVIQHGY.

Disordered stretches follow at residues 36–58 (KILPIKGMSSSDRKREASTALAS) and 249–285 (SLPSGQAHRDSMTVDDDSGDNSTQSLDASPLNTESEP). Residues 268–283 (DNSTQSLDASPLNTES) show a composition bias toward polar residues. The chain crosses the membrane as a helical span at residues 708 to 728 (LAIIAFYWKAWLILLMISAHN).

The protein belongs to the Integrator subunit 1 family. In terms of assembly, belongs to the multiprotein complex Integrator, at least composed of IntS1, IntS2, IntS3, IntS4, omd/IntS5, IntS6, defl/IntS7, IntS8, IntS9, IntS10, IntS11, IntS12, asun/IntS13, IntS14 and IntS15. The core complex associates with protein phosphatase 2A subunits mts/PP2A and Pp2A-29B, to form the Integrator-PP2A (INTAC) complex. Within the complex, interacts with IntS12 and IntS9. Interaction with IntS12 is likely to be important for promoting 3'-end processing of snRNAs. Interacts with Mediator complex members Cdk8 and CycC.

Its subcellular location is the nucleus membrane. The protein resides in the nucleus. Component of the integrator complex, a multiprotein complex that terminates RNA polymerase II (Pol II) transcription in the promoter-proximal region of genes. The integrator complex provides a quality checkpoint during transcription elongation by driving premature transcription termination of transcripts that are unfavorably configured for transcriptional elongation: the complex terminates transcription by (1) catalyzing dephosphorylation of the C-terminal domain (CTD) of Pol II subunit Polr2A/Rbp1 and Spt5, and (2) degrading the exiting nascent RNA transcript via endonuclease activity. The integrator complex is also involved in the 3'-end processing of the U7 snRNA, and also the spliceosomal snRNAs U1, U2, U4 and U5. Required for the normal expression of the Integrator complex component IntS12. The chain is Integrator complex subunit 1 from Drosophila melanogaster (Fruit fly).